The following is a 154-amino-acid chain: Aspartate carbamoyltransferase regulatory chain (154 aa).

Zn(2+)-binding residues include C109, C114, C138, and C141.

The protein belongs to the PyrI family. Contains catalytic and regulatory chains. The cofactor is Zn(2+).

Functionally, involved in allosteric regulation of aspartate carbamoyltransferase. The polypeptide is Aspartate carbamoyltransferase regulatory chain (Aliivibrio salmonicida (strain LFI1238) (Vibrio salmonicida (strain LFI1238))).